The following is a 329-amino-acid chain: Biotin--protein ligase 2 (329 aa).

The 185-residue stretch at 67 to 251 (ISTHRFGRFL…KFENFFDLFM (185 aa)) folds into the BPL/LPL catalytic domain. Residues 84-85 (ST), Gln107, 111-113 (RGR), and Lys182 contribute to the biotin site.

It belongs to the biotin--protein ligase family. As to expression, highly expressed in seeds. Expressed in roots, leaves, stems, flowers and siliques.

Its subcellular location is the cytoplasm. Its function is as follows. Seems to have no or limited implication in biotin-dependent carboxylase biotinylation in planta. The chain is Biotin--protein ligase 2 (HCS2) from Arabidopsis thaliana (Mouse-ear cress).